Consider the following 496-residue polypeptide: Cytochrome P450 71D181 (496 aa).

The chain crosses the membrane as a helical; Signal-anchor for type II membrane protein span at residues 1 to 21 (MDISISWVAIILVISSYFIFM). Residue C435 participates in heme binding. Residues 471-496 (MSETPGLSGPRKNPLIMVPTIHNPTS) form a disordered region.

Belongs to the cytochrome P450 family. Heme serves as cofactor. In terms of tissue distribution, expressed at low levels in flowers, leaves and stems.

The protein localises to the membrane. It carries out the reaction alpha-terpinene + 2 reduced [NADPH--hemoprotein reductase] + 2 O2 = carvacrol + 2 oxidized [NADPH--hemoprotein reductase] + 3 H2O + 2 H(+). The enzyme catalyses gamma-terpinene + 2 reduced [NADPH--hemoprotein reductase] + 2 O2 = carvacrol + 2 oxidized [NADPH--hemoprotein reductase] + 3 H2O + 2 H(+). The catalysed reaction is (4S)-limonene + reduced [NADPH--hemoprotein reductase] + O2 = (1S,5R)-carveol + oxidized [NADPH--hemoprotein reductase] + H2O + H(+). It catalyses the reaction (4R)-limonene + reduced [NADPH--hemoprotein reductase] + O2 = (1R,5S)-carveol + oxidized [NADPH--hemoprotein reductase] + H2O + H(+). The protein operates within secondary metabolite biosynthesis; terpenoid biosynthesis. Its function is as follows. Involved in the biosynthesis of phenolic monoterpenes natural products thymol and carvacrol which have a broad range of biological activities acting as antimicrobial compounds, insecticides, antioxidants and pharmaceutical agents. Catalyzes the C2-hydroxylation of gamma-terpinene and alpha-terpinene to produce carvacrol. Also mediates the C6-hydroxylation of (4S)-limonene and (4R)-limonene to form carveol. In Origanum vulgare (Wild marjoram), this protein is Cytochrome P450 71D181.